A 223-amino-acid polypeptide reads, in one-letter code: Endonuclease V (223 aa).

Mg(2+) contacts are provided by Asp35 and Asp103.

The protein belongs to the endonuclease V family. It depends on Mg(2+) as a cofactor.

The protein localises to the cytoplasm. The enzyme catalyses Endonucleolytic cleavage at apurinic or apyrimidinic sites to products with a 5'-phosphate.. Functionally, DNA repair enzyme involved in the repair of deaminated bases. Selectively cleaves double-stranded DNA at the second phosphodiester bond 3' to a deoxyinosine leaving behind the intact lesion on the nicked DNA. This is Endonuclease V from Salmonella agona (strain SL483).